Here is a 919-residue protein sequence, read N- to C-terminus: PAX3- and PAX7-binding protein 1 (919 aa).

The segment covering 1-11 has biased composition (basic residues); sequence MFRKARRVNVR. 3 disordered regions span residues 1 to 120, 151 to 206, and 237 to 277; these read MFRK…ENEE, KTEL…GGAF, and AREL…RIVF. At serine 16 the chain carries Phosphoserine. A compositionally biased stretch (acidic residues) spans 16–28; the sequence is SEEEERERDEEQE. Residues 49-59 show a composition bias toward low complexity; it reads RAPAGESLLGP. The span at 75 to 87 shows a compositional bias: gly residues; that stretch reads AEAGGGISGGAEP. Lysine 151 is covalently cross-linked (Glycyl lysine isopeptide (Lys-Gly) (interchain with G-Cter in SUMO1); alternate). A Glycyl lysine isopeptide (Lys-Gly) (interchain with G-Cter in SUMO2); alternate cross-link involves residue lysine 151. Serine 160 is subject to Phosphoserine. Positions 163–174 are enriched in basic and acidic residues; sequence PLDKTCHAKDTN. Over residues 185–195 the composition is skewed to acidic residues; that stretch reads GEDEMDMESEK. Phosphoserine is present on serine 193. Over residues 237-258 the composition is skewed to basic and acidic residues; it reads ARELGDFTPHDSEPGKGRLVRE. Residues 259–270 show a composition bias toward acidic residues; the sequence is DENDASDDEDDD. A phosphoserine mark is found at serine 264, serine 297, serine 559, and serine 560. A necessary and sufficient for interaction with PAX7 region spans residues 380 to 560; it reads TPSNEMAPVT…MADHLEGLSS (181 aa). The segment at 533–566 is disordered; sequence EREARRTRRRQAREQTGQMADHLEGLSSDDEETS. A Phosphothreonine modification is found at threonine 565.

Belongs to the GCF family. As to quaternary structure, interacts with PAX3 and PAX7. Interacts with WDR5; associates with a histone methyltransferase (HMT) complex composed at least of RBBP5, ASH2L, SET1, SET2 and KMT2A/MLL1, KMT2D/MLL2, KMT2C/MLL3 and KMT2B/MLL4 through direct interaction with WDR5. As to expression, ubiquitously expressed in all tissues tested including skeletal muscle. Expressed in primary myoblasts.

It is found in the nucleus. In terms of biological role, adapter protein linking the transcription factors PAX3 and PAX7 to the histone methylation machinery and involved in myogenesis. Associates with a histone methyltransferase complex that specifically mediates dimethylation and trimethylation of 'Lys-4' of histone H3. Mediates the recruitment of that complex to the transcription factors PAX3 and PAX7 on chromatin to regulate the expression of genes involved in muscle progenitor cells proliferation including ID3 and CDC20. The sequence is that of PAX3- and PAX7-binding protein 1 (Paxbp1) from Mus musculus (Mouse).